A 669-amino-acid polypeptide reads, in one-letter code: Zinc finger MYM-type protein 5 (669 aa).

Glycyl lysine isopeptide (Lys-Gly) (interchain with G-Cter in SUMO2) cross-links involve residues lysine 88, lysine 91, lysine 134, lysine 149, lysine 166, and lysine 225. 4 MYM-type zinc fingers span residues 265-299 (HLFCSTTCLSSFSHKRTQNTRSIICKKDASTKKAN), 311-351 (QEFY…RHEV), 358-393 (HKLCSNHCFNKYRLANGLIMNCCEHCGEYMPSKSTG), and 404-431 (KRFCCQSCINEYKQMMETKSKKLTASEN). Residues lysine 443, lysine 455, lysine 462, and lysine 552 each participate in a glycyl lysine isopeptide (Lys-Gly) (interchain with G-Cter in SUMO2) cross-link.

In terms of assembly, interacts (via N-terminal 120 amino acid region) with ETV5 (via C-terminal).

Its subcellular location is the nucleus. Functions as a transcriptional regulator. The protein is Zinc finger MYM-type protein 5 (ZMYM5) of Homo sapiens (Human).